A 371-amino-acid chain; its full sequence is MNKLPHETRVVIGMSGGVDSSVAALLLKEQGYDVIGIFMKNWDDTDENGVCTATEDYNDVIEVCNQIGIPYYAVNFEKQYWDKVFTYFLDEYRAGRTPNPDVMCNKEIKFKAFLEHAIALGADYVATGHYARVAYMDGEYKMLRGVDDNKDQTYFLNQLSQEQLSKTMFPLGELKKPQIREMAKEAGLATAAKKDSTGICFIGERNFKDFLSNYLPAQPGVMQTLSGEVKGKHDGLMYYTIGQRHGLGIGGNGDPWFAVGKNLKENILYVDQGFHNELLYGDEVIATNVGWVSNKEKETEFKCTAKFRYRQEDNKVTVQIVDENTVRILCDEPIRAITPGQAVVFYDGDECLGGATIDEVYRSGKKLDYLG.

ATP contacts are provided by residues G13–S20 and M39. The tract at residues N99–D101 is interaction with target base in tRNA. C104 (nucleophile) is an active-site residue. An intrachain disulfide couples C104 to C200. G128 provides a ligand contact to ATP. Positions K150–Q152 are interaction with tRNA. The active-site Cysteine persulfide intermediate is C200. Residues R308–Y309 form an interaction with tRNA region.

It belongs to the MnmA/TRMU family.

It localises to the cytoplasm. The catalysed reaction is S-sulfanyl-L-cysteinyl-[protein] + uridine(34) in tRNA + AH2 + ATP = 2-thiouridine(34) in tRNA + L-cysteinyl-[protein] + A + AMP + diphosphate + H(+). In terms of biological role, catalyzes the 2-thiolation of uridine at the wobble position (U34) of tRNA, leading to the formation of s(2)U34. The protein is tRNA-specific 2-thiouridylase MnmA of Bacillus cereus (strain ATCC 14579 / DSM 31 / CCUG 7414 / JCM 2152 / NBRC 15305 / NCIMB 9373 / NCTC 2599 / NRRL B-3711).